A 479-amino-acid chain; its full sequence is Cyclic AMP-responsive element-binding protein 3-like protein 3 (479 aa).

The Cytoplasmic segment spans residues 1 to 317; the sequence is MDGDIAAGKM…QSTSKPAHAG (317 aa). The disordered stretch occupies residues 67-144; the sequence is CILGPGDSDP…CPEPPRTQVQ (78 aa). Residues 98-110 show a composition bias toward polar residues; the sequence is PQDTPPRSGTEPA. Residues 239–302 form the bZIP domain; that stretch reads VLKKIRRKIR…LSLLEQLKHL (64 aa). The segment at 241-270 is basic motif; it reads KKIRRKIRNKQSAQESRKKKKEYIDGLENR. A leucine-zipper region spans residues 281 to 302; sequence LQRKVLHLEKQNLSLLEQLKHL. Lys290 participates in a covalent cross-link: Glycyl lysine isopeptide (Lys-Gly) (interchain with G-Cter in ubiquitin). A helical; Signal-anchor for type II membrane protein transmembrane segment spans residues 318–338; sequence TCIAVLLLSFALIILPSISPF. At 339–479 the chain is on the lumenal side; the sequence is NSNKVDSPGD…RLVQDALGVL (141 aa). N-linked (GlcNAc...) asparagine glycans are attached at residues Asn411, Asn418, and Asn425.

The protein belongs to the bZIP family. ATF subfamily. As to quaternary structure, binds DNA as a dimer. May form homodimers. Interacts with ATF6. Interacts with SYNV1/HRD1; this interaction leads to CREB3L3 ubiquitination and proteasomal degradation. Following ER stress a fragment containing the cytoplasmic transcription factor domain is released by proteolysis. The cleavage seems to be performed sequentially by site-1 and site-2 proteases. In terms of processing, N-glycosylation is required for optimal proteolytic activation. Post-translationally, ubiquitinated at Lys-290 by SYNV1/HRD1 via 'Lys-27'-linked ubiquitin. In terms of tissue distribution, expressed in adult liver (at protein level) and small intestine.

The protein resides in the endoplasmic reticulum membrane. It localises to the nucleus. In terms of biological role, transcription factor that may act during endoplasmic reticulum (ER) stress by activating unfolded protein response target genes. Activated in response to cAMP stimulation. Binds to the cAMP response element (CRE). Activates transcription through box-B element. Activates transcription through CRE. May function synergistically with ATF6. In acute inflammatory response, may activate expression of acute phase response (APR) genes. May be involved in growth suppression. Regulates FGF21 transcription. Plays a crucial role in the regulation of triglyceride metabolism and is required for the maintenance of normal plasma triglyceride concentrations. This Mus musculus (Mouse) protein is Cyclic AMP-responsive element-binding protein 3-like protein 3 (Creb3l3).